The primary structure comprises 422 residues: DNA-binding transcriptional activator AdeR (422 aa).

The protein belongs to the CdaR family.

In terms of biological role, activates ald expression in response to alanine availability and is important for normal sporulation in B.subtilis. This chain is DNA-binding transcriptional activator AdeR, found in Bacillus subtilis (strain 168).